Consider the following 397-residue polypeptide: Mannonate dehydratase (397 aa).

Belongs to the mannonate dehydratase family. Fe(2+) serves as cofactor. Requires Mn(2+) as cofactor.

It carries out the reaction D-mannonate = 2-dehydro-3-deoxy-D-gluconate + H2O. It functions in the pathway carbohydrate metabolism; pentose and glucuronate interconversion. In terms of biological role, catalyzes the dehydration of D-mannonate. The polypeptide is Mannonate dehydratase (Yersinia pestis bv. Antiqua (strain Angola)).